The chain runs to 192 residues: Fe/S biogenesis protein NfuA (192 aa).

Residues cysteine 149 and cysteine 152 each coordinate [4Fe-4S] cluster.

Belongs to the NfuA family. Homodimer. [4Fe-4S] cluster is required as a cofactor.

Functionally, involved in iron-sulfur cluster biogenesis. Binds a 4Fe-4S cluster, can transfer this cluster to apoproteins, and thereby intervenes in the maturation of Fe/S proteins. Could also act as a scaffold/chaperone for damaged Fe/S proteins. The protein is Fe/S biogenesis protein NfuA of Shewanella frigidimarina (strain NCIMB 400).